A 279-amino-acid chain; its full sequence is NADPH-dependent 7-cyano-7-deazaguanine reductase (279 aa).

Residue 86–88 coordinates substrate; the sequence is IES. 88–89 contributes to the NADPH binding site; the sequence is SK. Cys-187 functions as the Thioimide intermediate in the catalytic mechanism. Catalysis depends on Asp-194, which acts as the Proton donor. 226–227 provides a ligand contact to substrate; that stretch reads HE. NADPH is bound at residue 255–256; it reads RG.

It belongs to the GTP cyclohydrolase I family. QueF type 2 subfamily. As to quaternary structure, homodimer.

It is found in the cytoplasm. It carries out the reaction 7-aminomethyl-7-carbaguanine + 2 NADP(+) = 7-cyano-7-deazaguanine + 2 NADPH + 3 H(+). The protein operates within tRNA modification; tRNA-queuosine biosynthesis. Functionally, catalyzes the NADPH-dependent reduction of 7-cyano-7-deazaguanine (preQ0) to 7-aminomethyl-7-deazaguanine (preQ1). This is NADPH-dependent 7-cyano-7-deazaguanine reductase from Haemophilus influenzae (strain ATCC 51907 / DSM 11121 / KW20 / Rd).